Consider the following 1437-residue polypeptide: Myomesin-3 (1437 aa).

The tract at residues 1 to 49 (MTLPHSLGGAGDPRPPQAMEVHRLEHRQEEEQKEERQHSLRMGSSVRRR) is disordered. Residues 20–38 (EVHRLEHRQEEEQKEERQH) are compositionally biased toward basic and acidic residues. Residues 120-149 (RLLRQRRDWKTLRRRTEEKVQEAKELRELC) are a coiled coil. 2 consecutive Ig-like C2-type domains span residues 154–246 (PWFW…AKVL) and 269–361 (PSVE…TYVL). Fibronectin type-III domains lie at 375-469 (SPLN…VMGD), 503-598 (PPTN…LRGP), 604-696 (PPAQ…VKQA), 702-797 (APYG…CKEW), and 804-899 (PPYD…LEDK). 2 consecutive Ig-like C2-type domains span residues 1120 to 1205 (PYFE…LDLT) and 1334 to 1423 (AKVV…VTIS).

As to quaternary structure, homodimer.

It is found in the cytoplasm. The protein resides in the myofibril. It localises to the sarcomere. The protein localises to the m line. Functionally, may link the intermediate filament cytoskeleton to the M-disk of the myofibrils in striated muscle. This Homo sapiens (Human) protein is Myomesin-3 (MYOM3).